A 180-amino-acid chain; its full sequence is ATP-dependent protease subunit HslV (180 aa).

Thr5 is an active-site residue. Na(+) contacts are provided by Gly165, Cys168, and Thr171.

It belongs to the peptidase T1B family. HslV subfamily. A double ring-shaped homohexamer of HslV is capped on each side by a ring-shaped HslU homohexamer. The assembly of the HslU/HslV complex is dependent on binding of ATP.

The protein localises to the cytoplasm. The catalysed reaction is ATP-dependent cleavage of peptide bonds with broad specificity.. Allosterically activated by HslU binding. Functionally, protease subunit of a proteasome-like degradation complex believed to be a general protein degrading machinery. This chain is ATP-dependent protease subunit HslV, found in Helicobacter pylori (strain P12).